The chain runs to 100 residues: Aspartyl/glutamyl-tRNA(Asn/Gln) amidotransferase subunit C (100 aa).

The protein belongs to the GatC family. In terms of assembly, heterotrimer of A, B and C subunits.

The enzyme catalyses L-glutamyl-tRNA(Gln) + L-glutamine + ATP + H2O = L-glutaminyl-tRNA(Gln) + L-glutamate + ADP + phosphate + H(+). It carries out the reaction L-aspartyl-tRNA(Asn) + L-glutamine + ATP + H2O = L-asparaginyl-tRNA(Asn) + L-glutamate + ADP + phosphate + 2 H(+). Allows the formation of correctly charged Asn-tRNA(Asn) or Gln-tRNA(Gln) through the transamidation of misacylated Asp-tRNA(Asn) or Glu-tRNA(Gln) in organisms which lack either or both of asparaginyl-tRNA or glutaminyl-tRNA synthetases. The reaction takes place in the presence of glutamine and ATP through an activated phospho-Asp-tRNA(Asn) or phospho-Glu-tRNA(Gln). The sequence is that of Aspartyl/glutamyl-tRNA(Asn/Gln) amidotransferase subunit C from Rickettsia bellii (strain RML369-C).